We begin with the raw amino-acid sequence, 807 residues long: Glucocorticoid receptor (807 aa).

Disordered stretches follow at residues 1–47, 246–284, and 412–438; these read MDQG…LPSP, TDVN…QHQQ, and FSVS…SKPS. The tract at residues 1–444 is modulating; sequence MDQGGLKRNC…SKPSGPTHKI (444 aa). Residues 257 to 282 show a composition bias toward basic residues; it reads LQHHQHQQQQHRHLLQHQQHQLHHQH. Low complexity predominate over residues 412-421; the sequence is FSVSFSSSSP. NR C4-type zinc fingers lie at residues 445-465 and 490-514; these read CLVC…CGSC and CAGR…FRKC. The segment at residues 445-519 is a DNA-binding region (nuclear receptor); it reads CLVCSDEASG…RFRKCLQAGM (75 aa). Positions 520–553 are hinge; sequence NLEARKNKKLIKMKVHRPTGSAEPISNMPVPVIP. The NR LBD domain occupies 554–788; it reads RMPQLVPTML…FPEMLAEIIT (235 aa).

It belongs to the nuclear hormone receptor family. NR3 subfamily. Heteromultimeric cytoplasmic complex with HSP90. Upon ligand binding the complex undergoes a conformation change and moves to the nucleus, where it dissociates. Binds to DNA as a homodimer, and as heterodimer with NR3C2. Interaction with numerous other transcription factors modulates transcription activation.

It is found in the cytoplasm. The protein resides in the nucleus. It localises to the mitochondrion. The protein localises to the cytoskeleton. Its subcellular location is the spindle. It is found in the microtubule organizing center. The protein resides in the centrosome. Receptor for glucocorticoids (GC). Has a dual mode of action: as a transcription factor that binds to glucocorticoid response elements (GRE), both for nuclear and mitochondrial DNA, and as a modulator of other transcription factors. Affects inflammatory responses, cellular proliferation and differentiation in target tissues. Involved in chromatin remodeling. Plays a role in rapid mRNA degradation by binding to the 5' UTR of target mRNAs and interacting with PNRC2 in a ligand-dependent manner which recruits the RNA helicase UPF1 and the mRNA-decapping enzyme DCP1A, leading to RNA decay. Could act as a coactivator for STAT5-dependent transcription upon growth hormone (GH) stimulation and could reveal an essential role of hepatic GR in the control of body growth. Mediates glucocorticoid-induced apoptosis. Promotes accurate chromosome segregation during mitosis. May act as a tumor suppressor. May play a negative role in adipogenesis through the regulation of lipolytic and antilipogenic gene expression. The sequence is that of Glucocorticoid receptor (nr3c1) from Paralichthys olivaceus (Bastard halibut).